Consider the following 126-residue polypeptide: Fluoride-specific ion channel FluC (126 aa).

Helical transmembrane passes span 6 to 26 (FVAV…FAVL), 36 to 56 (YGTL…VGFF), 69 to 89 (LAIT…SEVV), and 99 to 119 (WAGL…AFGL). Positions 76 and 79 each coordinate Na(+).

The protein belongs to the fluoride channel Fluc/FEX (TC 1.A.43) family.

It localises to the cell inner membrane. It catalyses the reaction fluoride(in) = fluoride(out). With respect to regulation, na(+) is not transported, but it plays an essential structural role and its presence is essential for fluoride channel function. Fluoride-specific ion channel. Important for reducing fluoride concentration in the cell, thus reducing its toxicity. In Cupriavidus necator (strain ATCC 17699 / DSM 428 / KCTC 22496 / NCIMB 10442 / H16 / Stanier 337) (Ralstonia eutropha), this protein is Fluoride-specific ion channel FluC.